Reading from the N-terminus, the 255-residue chain is uncharacterized protein (255 aa).

Disordered stretches follow at residues 112–145 (CWPG…PSPG) and 157–183 (GLAE…PDAQ).

This is an uncharacterized protein from Rhodospirillum rubrum.